The chain runs to 518 residues: Probable Xaa-Pro aminopeptidase HCDG_07916 (518 aa).

Mn(2+)-binding residues include D289, D300, E437, and E475.

This sequence belongs to the peptidase M24B family. It depends on Mn(2+) as a cofactor.

The enzyme catalyses Release of any N-terminal amino acid, including proline, that is linked to proline, even from a dipeptide or tripeptide.. Catalyzes the removal of a penultimate prolyl residue from the N-termini of peptides. The chain is Probable Xaa-Pro aminopeptidase HCDG_07916 from Ajellomyces capsulatus (strain H143) (Darling's disease fungus).